Reading from the N-terminus, the 385-residue chain is Dual-specificity RNA methyltransferase RlmN (385 aa).

The Proton acceptor role is filled by Glu-113. Residues 120 to 352 (VGRAGALCVS…NRAGYASPIR (233 aa)) enclose the Radical SAM core domain. A disulfide bridge links Cys-127 with Cys-363. Cys-134, Cys-138, and Cys-141 together coordinate [4Fe-4S] cluster. Residues 189–190 (GE), Ser-221, 243–245 (SLH), and Asn-320 contribute to the S-adenosyl-L-methionine site. Residue Cys-363 is the S-methylcysteine intermediate of the active site.

The protein belongs to the radical SAM superfamily. RlmN family. [4Fe-4S] cluster serves as cofactor.

It is found in the cytoplasm. It catalyses the reaction adenosine(2503) in 23S rRNA + 2 reduced [2Fe-2S]-[ferredoxin] + 2 S-adenosyl-L-methionine = 2-methyladenosine(2503) in 23S rRNA + 5'-deoxyadenosine + L-methionine + 2 oxidized [2Fe-2S]-[ferredoxin] + S-adenosyl-L-homocysteine. It carries out the reaction adenosine(37) in tRNA + 2 reduced [2Fe-2S]-[ferredoxin] + 2 S-adenosyl-L-methionine = 2-methyladenosine(37) in tRNA + 5'-deoxyadenosine + L-methionine + 2 oxidized [2Fe-2S]-[ferredoxin] + S-adenosyl-L-homocysteine. Specifically methylates position 2 of adenine 2503 in 23S rRNA and position 2 of adenine 37 in tRNAs. m2A2503 modification seems to play a crucial role in the proofreading step occurring at the peptidyl transferase center and thus would serve to optimize ribosomal fidelity. This chain is Dual-specificity RNA methyltransferase RlmN, found in Phenylobacterium zucineum (strain HLK1).